Reading from the N-terminus, the 299-residue chain is CDP-abequose synthase (299 aa).

Substrate is bound at residue Thr117. Tyr134 functions as the Proton acceptor in the catalytic mechanism.

This sequence belongs to the NAD(P)-dependent epimerase/dehydratase family.

It carries out the reaction CDP-alpha-D-abequose + NADP(+) = CDP-4-dehydro-3,6-dideoxy-alpha-D-glucose + NADPH + H(+). It participates in bacterial outer membrane biogenesis; LPS O-antigen biosynthesis. The chain is CDP-abequose synthase (rfbJ) from Salmonella typhimurium (strain LT2 / SGSC1412 / ATCC 700720).